The sequence spans 264 residues: Apolipoprotein A-I (264 aa).

A signal peptide spans 1 to 18; it reads MKAVVLAVALVFLTGSQA. 2 tandem repeats follow at residues 67 to 88 and 89 to 110. A 10 X approximate tandem repeats region spans residues 67 to 264; the sequence is LNLLENWDTL…DKARETLTAQ (198 aa). At Met109 the chain carries Methionine sulfoxide. A 3; half-length repeat occupies 111–121; it reads KDLEEVKQNVQ. Tandem repeats lie at residues 122-143, 144-165, and 166-187. The stretch at 188-207 is one 7; truncated repeat; that stretch reads PHSDKLRESLAQRLAELKSN. Repeat unit 8 spans residues 208–229; the sequence is PTLNEYHTRAKTHLNTFGEKAR. Residues 230-240 form a 9; half-length repeat; that stretch reads PALEDLRHTLI. Residues 241–264 form repeat 10; it reads PILDTLKTKVKSVIDKARETLTAQ.

Belongs to the apolipoprotein A1/A4/E family. In terms of assembly, homodimer. Interacts with APOA1BP and CLU. Component of a sperm activating protein complex (SPAP), consisting of APOA1, an immunoglobulin heavy chain, an immunoglobulin light chain and albumin. Interacts with NDRG1. Interacts with SCGB3A2. Interacts with NAXE and YJEFN3. Glycosylated. In terms of processing, palmitoylated. Post-translationally, phosphorylation sites are present in the extracellular medium.

It is found in the secreted. Participates in the reverse transport of cholesterol from tissues to the liver for excretion by promoting cholesterol efflux from tissues and by acting as a cofactor for the lecithin cholesterol acyltransferase (LCAT). As part of the SPAP complex, activates spermatozoa motility. In Mus pahari (Gairdner's shrew-mouse), this protein is Apolipoprotein A-I (Apoa1).